Here is a 200-residue protein sequence, read N- to C-terminus: Cytochrome c biogenesis ATP-binding export protein CcmA (200 aa).

Residues 1 to 199 form the ABC transporter domain; that stretch reads MRLTGRGLRC…AARELRIGGA (199 aa). ATP is bound at residue 35–42; that stretch reads GANGAGKT.

It belongs to the ABC transporter superfamily. CcmA exporter (TC 3.A.1.107) family. The complex is composed of two ATP-binding proteins (CcmA) and two transmembrane proteins (CcmB).

The protein localises to the cell inner membrane. The enzyme catalyses heme b(in) + ATP + H2O = heme b(out) + ADP + phosphate + H(+). Its function is as follows. Part of the ABC transporter complex CcmAB involved in the biogenesis of c-type cytochromes; once thought to export heme, this seems not to be the case, but its exact role is uncertain. Responsible for energy coupling to the transport system. This Rhodopseudomonas palustris (strain BisB18) protein is Cytochrome c biogenesis ATP-binding export protein CcmA.